Here is a 419-residue protein sequence, read N- to C-terminus: Tryptophan synthase beta chain (419 aa).

An N6-(pyridoxal phosphate)lysine modification is found at lysine 98.

It belongs to the TrpB family. As to quaternary structure, tetramer of two alpha and two beta chains. It depends on pyridoxal 5'-phosphate as a cofactor.

The catalysed reaction is (1S,2R)-1-C-(indol-3-yl)glycerol 3-phosphate + L-serine = D-glyceraldehyde 3-phosphate + L-tryptophan + H2O. It participates in amino-acid biosynthesis; L-tryptophan biosynthesis; L-tryptophan from chorismate: step 5/5. In terms of biological role, the beta subunit is responsible for the synthesis of L-tryptophan from indole and L-serine. This chain is Tryptophan synthase beta chain, found in Ruegeria sp. (strain TM1040) (Silicibacter sp.).